The following is an 86-amino-acid chain: MLRLVLLLLVTDFAASHETLDSSDSQIMKRSQFRTPDCGHFDFPACPRNLNPVCGTDMNTYSNECTLCMKIREDGSHINIIKDEPC.

Positions 1 to 16 are cleaved as a signal peptide; the sequence is MLRLVLLLLVTDFAAS. In terms of domain architecture, Kazal-like spans 32 to 86; it reads QFRTPDCGHFDFPACPRNLNPVCGTDMNTYSNECTLCMKIREDGSHINIIKDEPC. Cystine bridges form between C38–C68, C46–C65, and C54–C86.

As to expression, expressed in sperm (at protein level). Expressed in testis but not in ovary, brain, heart, kidney or lung. Within testis, expressed in epididymis and germ cells.

The protein resides in the secreted. It localises to the cytoplasmic vesicle. The protein localises to the secretory vesicle. Its subcellular location is the acrosome. Its function is as follows. As a strong inhibitor of acrosin, it is required for normal spermiogenesis. It probably hinders premature activation of proacrosin and other proteases, thus preventing the cascade of events leading to spermiogenesis defects. May be involved in the regulation of serine protease-dependent germ cell apoptosis. It also inhibits trypsin. The protein is Serine protease inhibitor Kazal-type 2 (Spink2) of Mus musculus (Mouse).